The following is a 213-amino-acid chain: uncharacterized protein (213 aa).

The 90-residue stretch at 2–91 (SRHPEVKWAQ…AEAKWWKKLV (90 aa)) folds into the CS domain. Residues 168–213 (GMGGMGGMDEFEDESDDEEEVSKPQDAEKAAEAGKSQESDAKAETS) are disordered. Residues 176-187 (DEFEDESDDEEE) show a composition bias toward acidic residues. A compositionally biased stretch (basic and acidic residues) spans 188–213 (VSKPQDAEKAAEAGKSQESDAKAETS).

This sequence belongs to the p23/wos2 family.

This is an uncharacterized protein from Oryza sativa subsp. japonica (Rice).